Here is a 122-residue protein sequence, read N- to C-terminus: MARIAGIDLPRNKRIEIALTYIYGIGRTTAQKILAESGVSVDTRTDSLTEAEVAKIREFIDKNIKVEGDLRRDVSMNIKRLMDLGCYRGLRHRKGLPVRGQRTKTNARTRKGPARTVAGKKK.

The segment at 97–122 (PVRGQRTKTNARTRKGPARTVAGKKK) is disordered.

It belongs to the universal ribosomal protein uS13 family. In terms of assembly, part of the 30S ribosomal subunit. Forms a loose heterodimer with protein S19. Forms two bridges to the 50S subunit in the 70S ribosome.

Functionally, located at the top of the head of the 30S subunit, it contacts several helices of the 16S rRNA. In the 70S ribosome it contacts the 23S rRNA (bridge B1a) and protein L5 of the 50S subunit (bridge B1b), connecting the 2 subunits; these bridges are implicated in subunit movement. Contacts the tRNAs in the A and P-sites. The protein is Small ribosomal subunit protein uS13 of Geobacter metallireducens (strain ATCC 53774 / DSM 7210 / GS-15).